The sequence spans 385 residues: Probable peptidoglycan glycosyltransferase FtsW (385 aa).

9 consecutive transmembrane segments (helical) span residues 18 to 38 (LLWTAILLALAGLVMVSSASL), 57 to 77 (IYLALGLGVGAFVYYAVPLAL), 81 to 101 (LRFVMLPVALVALVMVFIPGL), 111 to 131 (WIALPGLTIQASEIVKLCFVL), 157 to 177 (LLGVLMLLLLLEPDFGAVVVL), 195 to 215 (FLLIGLIAVALGGLVAFAEPY), 280 to 300 (LGLLGNVALIGGFILLGWRVF), 311 to 331 (LLYHAYLVYGCAFVFCSQAFI), and 347 to 367 (LPFISYGGSSLLISAVMVGLI).

It belongs to the SEDS family. FtsW subfamily.

Its subcellular location is the cell inner membrane. The enzyme catalyses [GlcNAc-(1-&gt;4)-Mur2Ac(oyl-L-Ala-gamma-D-Glu-L-Lys-D-Ala-D-Ala)](n)-di-trans,octa-cis-undecaprenyl diphosphate + beta-D-GlcNAc-(1-&gt;4)-Mur2Ac(oyl-L-Ala-gamma-D-Glu-L-Lys-D-Ala-D-Ala)-di-trans,octa-cis-undecaprenyl diphosphate = [GlcNAc-(1-&gt;4)-Mur2Ac(oyl-L-Ala-gamma-D-Glu-L-Lys-D-Ala-D-Ala)](n+1)-di-trans,octa-cis-undecaprenyl diphosphate + di-trans,octa-cis-undecaprenyl diphosphate + H(+). It functions in the pathway cell wall biogenesis; peptidoglycan biosynthesis. In terms of biological role, peptidoglycan polymerase that is essential for cell division. In Alcanivorax borkumensis (strain ATCC 700651 / DSM 11573 / NCIMB 13689 / SK2), this protein is Probable peptidoglycan glycosyltransferase FtsW.